A 916-amino-acid chain; its full sequence is MASLIEKLLRTGDKKTLRQLRNYADSINALEDSFKTFTDAELREETDRLRERHQDGEKLDNLLPEAFAAVREASSRTLGMRHFDVQLMGGAALHLGNIAEMKTGEGKTLVATAPAYLNALTGKGVHVVTVNDYLAEYQSDLMGRVYRFLGLTSGCILANQDPAVRREQYAADITYGTNNEFGFDYLRDNMAWDRNELVQRGHNFAIVDEVDSILIDEARTPLIISGPAQGDTNRWYSEFAKVVLRLQPEKDYEVDEKKRTVGVLEGGIEKVEDYLGISNLYESANTPLIGFLNNAIKAKELFKRDKDYVIMDGEVLIVDEHTGRILAGRRYNEGMHQAIEAKEGVEIKAENQTLATVTLQNYFRMYGKLSGMTGTAETEAAEFMSTYKLGVVAIPTNRDMQRIDQSDLVFKNETVKFDAVVRDIAERHEKGQPVLVGTTSVEKSEYLSRLLAKDGIRHEVLNAKNHAREAAIVAQAGRKAAVTVATNMAGRGTDIMLGGNAEFTAVAELAKRGLDPEENSEEYESAWPAALEAAKQAVKDEHEEVLNLGGLYVLGTERHESRRIDNQLRGRSGRQGDPGESRFYLSLTDDLMRLFNSGAAERLMNSSVPDDVALESKLVSRAIASAQGQVEGRNAEQRKNVLKYDDVLNRQREAIYSDRRRILEGDDLHEKVQFFVEDTIMALIDDATAGGNGDDWDFHQLWTNLKTLYPVSVSADDIIEEAGGKSRLTVEFLKEELLSDARLVYQAREESIGSESMRELERRVVLSVIGRKWQEHLYEMDYLKEGIGLRAMAQRDPLVEYQREGFTLFQSMMEAIREESVGFLFNLEVEVTPAQDVVVEDAAGGHTEHVEPQVRAAGLEAPEKPAQLQYTAPSEGGGTQTRVETRSTGRSGNPAKAAEQDAAKDAAKRPAKKKRR.

Residues Gln86, 104-108, and Asp494 contribute to the ATP site; that span reads GEGKT. The disordered stretch occupies residues 859–916; that stretch reads LEAPEKPAQLQYTAPSEGGGTQTRVETRSTGRSGNPAKAAEQDAAKDAAKRPAKKKRR. A compositionally biased stretch (polar residues) spans 880 to 891; it reads QTRVETRSTGRS. The segment covering 898 to 908 has biased composition (basic and acidic residues); sequence AEQDAAKDAAK.

Belongs to the SecA family. Monomer and homodimer. Part of the essential Sec protein translocation apparatus which comprises SecA, SecYEG and auxiliary proteins SecDF. Other proteins may also be involved.

Its subcellular location is the cell membrane. The protein localises to the cytoplasm. The catalysed reaction is ATP + H2O + cellular proteinSide 1 = ADP + phosphate + cellular proteinSide 2.. Functionally, part of the Sec protein translocase complex. Interacts with the SecYEG preprotein conducting channel. Has a central role in coupling the hydrolysis of ATP to the transfer of proteins into and across the cell membrane, serving as an ATP-driven molecular motor driving the stepwise translocation of polypeptide chains across the membrane. This is Protein translocase subunit SecA from Pseudarthrobacter chlorophenolicus (strain ATCC 700700 / DSM 12829 / CIP 107037 / JCM 12360 / KCTC 9906 / NCIMB 13794 / A6) (Arthrobacter chlorophenolicus).